Consider the following 249-residue polypeptide: Leucyl/phenylalanyl-tRNA--protein transferase (249 aa).

The interval 1–21 (MSRTLPHLLSSDPASPFPPAE) is disordered.

Belongs to the L/F-transferase family.

It localises to the cytoplasm. It catalyses the reaction N-terminal L-lysyl-[protein] + L-leucyl-tRNA(Leu) = N-terminal L-leucyl-L-lysyl-[protein] + tRNA(Leu) + H(+). The catalysed reaction is N-terminal L-arginyl-[protein] + L-leucyl-tRNA(Leu) = N-terminal L-leucyl-L-arginyl-[protein] + tRNA(Leu) + H(+). It carries out the reaction L-phenylalanyl-tRNA(Phe) + an N-terminal L-alpha-aminoacyl-[protein] = an N-terminal L-phenylalanyl-L-alpha-aminoacyl-[protein] + tRNA(Phe). Its function is as follows. Functions in the N-end rule pathway of protein degradation where it conjugates Leu, Phe and, less efficiently, Met from aminoacyl-tRNAs to the N-termini of proteins containing an N-terminal arginine or lysine. The protein is Leucyl/phenylalanyl-tRNA--protein transferase of Xanthomonas campestris pv. campestris (strain 8004).